Reading from the N-terminus, the 170-residue chain is MKEEKKLLLREVEEKISASQGFILLRYLGFTAAHSREFRNSLSGVSAEFEVLKKRIFFKAMQSAGFDIDSSDTSGHLGVVFAYDDAVSAAKQVLDFNKQYNDSLVFLAGRIDSANLSGKEVEAVAKLPSMKELRQQIVGLLAAPMSQVVGIMGSALSGVISCIDQKTQKN.

The protein belongs to the universal ribosomal protein uL10 family. Part of the ribosomal stalk of the 50S ribosomal subunit. The N-terminus interacts with L11 and the large rRNA to form the base of the stalk. The C-terminus forms an elongated spine to which L12 dimers bind in a sequential fashion forming a multimeric L10(L12)X complex.

In terms of biological role, forms part of the ribosomal stalk, playing a central role in the interaction of the ribosome with GTP-bound translation factors. This Chlamydia abortus (strain DSM 27085 / S26/3) (Chlamydophila abortus) protein is Large ribosomal subunit protein uL10.